Consider the following 420-residue polypeptide: Methylaspartate ammonia-lyase 1 (420 aa).

Residue Gln-173 coordinates (2S,3S)-3-methyl-L-aspartate. Mg(2+)-binding residues include Asp-237, Glu-272, and Asp-306. Residue Gln-328 coordinates (2S,3S)-3-methyl-L-aspartate. Lys-330 acts as the Proton acceptor in catalysis. 359 to 360 (SC) contacts (2S,3S)-3-methyl-L-aspartate.

Homodimer. Mg(2+) is required as a cofactor.

The enzyme catalyses (2S,3S)-3-methyl-L-aspartate = mesaconate + NH4(+). Its pathway is amino-acid degradation; L-glutamate degradation via mesaconate pathway; acetate and pyruvate from L-glutamate: step 2/4. Functionally, involved in the methylaspartate cycle. Catalyzes the formation of the alpha,beta-unsaturated bond by the reversible anti elimination of ammonia from L-threo-beta-methylaspartate (L-threo-(2S,3S)-3-methylaspartate) to give mesaconate. It can also catalyze the amination of fumarate and ethylfumarate, and the deamination of hydroxylamine, hydrazine, methylamine and ethylamine. The chain is Methylaspartate ammonia-lyase 1 from Carboxydothermus hydrogenoformans (strain ATCC BAA-161 / DSM 6008 / Z-2901).